A 750-amino-acid chain; its full sequence is Pesticidal crystal protein Cry11Bb (750 aa).

The segment at 672–750 (QGYNDNYNQN…NYNQNTSSGV (79 aa)) is disordered.

This sequence belongs to the delta endotoxin family.

In terms of biological role, promotes colloidosmotic lysis by binding to the midgut epithelial cells of mosquito larvae such as Aedes aegypti, Anopheles albimanus and Culex quinquefasciatus. In Bacillus thuringiensis subsp. medellin, this protein is Pesticidal crystal protein Cry11Bb (cry11Bb).